A 166-amino-acid polypeptide reads, in one-letter code: Transcriptional repressor NrdR (166 aa).

Residues 3-34 (CIKCGNMEDKVIDSRPIKEGKSIRRRRECLRC) fold into a zinc finger. An ATP-cone domain is found at 49–139 (LFVKKRNGSI…VYCKFHDAKD (91 aa)).

Belongs to the NrdR family. It depends on Zn(2+) as a cofactor.

In terms of biological role, negatively regulates transcription of bacterial ribonucleotide reductase nrd genes and operons by binding to NrdR-boxes. The protein is Transcriptional repressor NrdR of Methylacidiphilum infernorum (isolate V4) (Methylokorus infernorum (strain V4)).